Consider the following 347-residue polypeptide: Heme A synthase (347 aa).

8 helical membrane-spanning segments follow: residues 17–37, 106–126, 132–152, 165–185, 202–222, 260–280, 295–315, and 317–337; these read LANWLLLVAVLVFAIVVVGGI, GIGAVLAGVMIVAWWKRAIPA, MIGIFALGGLQGAIGWWMVYS, LATHLIAALLIFSALVWTVLD, ALAIAAVLILAVQIMLGAFVA, IVVQFVHRWWAWAAAIAALAV, AVATLIVVQIALGIATLLTGV, and IAVAVAHQAVAVLLLAALLWA. His266 contributes to the heme binding site. His323 is a heme binding site.

It belongs to the COX15/CtaA family. Type 2 subfamily. As to quaternary structure, interacts with CtaB. Heme b serves as cofactor.

The protein resides in the cell membrane. It carries out the reaction Fe(II)-heme o + 2 A + H2O = Fe(II)-heme a + 2 AH2. Its pathway is porphyrin-containing compound metabolism; heme A biosynthesis; heme A from heme O: step 1/1. Catalyzes the conversion of heme O to heme A by two successive hydroxylations of the methyl group at C8. The first hydroxylation forms heme I, the second hydroxylation results in an unstable dihydroxymethyl group, which spontaneously dehydrates, resulting in the formyl group of heme A. This is Heme A synthase from Rhizorhabdus wittichii (strain DSM 6014 / CCUG 31198 / JCM 15750 / NBRC 105917 / EY 4224 / RW1) (Sphingomonas wittichii).